We begin with the raw amino-acid sequence, 80 residues long: Protein CEBPZOS (80 aa).

A helical membrane pass occupies residues 15-31 (GVLAAELVGVAGAYCLF).

It is found in the mitochondrion membrane. The sequence is that of Protein CEBPZOS from Mus musculus (Mouse).